The chain runs to 410 residues: Translation initiation factor 2 subunit gamma (410 aa).

The tr-type G domain maps to 6–203 (QSEINIGMVG…AIEDLMPTPE (198 aa)). Positions 15–22 (GHVDHGKT) are G1. Mg(2+) is bound by residues D18, T22, G43, and S45. 18-23 (DHGKTS) serves as a coordination point for GTP. Residues 43 to 47 (GISIR) are G2. Zn(2+) contacts are provided by C58, C61, C73, and C76. Residues 90 to 93 (DAPG) are G3. Residues 146–149 (NKID) and 181–183 (SAH) each bind GTP. Positions 146-149 (NKID) are G4. The G5 stretch occupies residues 181–183 (SAH).

Belongs to the TRAFAC class translation factor GTPase superfamily. Classic translation factor GTPase family. EIF2G subfamily. In terms of assembly, heterotrimer composed of an alpha, a beta and a gamma chain. Mg(2+) is required as a cofactor.

The catalysed reaction is GTP + H2O = GDP + phosphate + H(+). Functionally, eIF-2 functions in the early steps of protein synthesis by forming a ternary complex with GTP and initiator tRNA. The chain is Translation initiation factor 2 subunit gamma from Methanococcus aeolicus (strain ATCC BAA-1280 / DSM 17508 / OCM 812 / Nankai-3).